The chain runs to 308 residues: Elongation factor Ts (308 aa).

An involved in Mg(2+) ion dislocation from EF-Tu region spans residues 79-82 (TDFV).

The protein belongs to the EF-Ts family.

It localises to the cytoplasm. Functionally, associates with the EF-Tu.GDP complex and induces the exchange of GDP to GTP. It remains bound to the aminoacyl-tRNA.EF-Tu.GTP complex up to the GTP hydrolysis stage on the ribosome. The sequence is that of Elongation factor Ts from Bdellovibrio bacteriovorus (strain ATCC 15356 / DSM 50701 / NCIMB 9529 / HD100).